A 513-amino-acid chain; its full sequence is Xylose import ATP-binding protein XylG (513 aa).

ABC transporter domains follow at residues 5-242 and 259-505; these read LEMK…VERE and LRIE…LRSE. ATP is bound at residue 37–44; the sequence is GENGSGKS.

Belongs to the ABC transporter superfamily. Xylose importer (TC 3.A.1.2.4) family. The complex is composed of two ATP-binding proteins (XylG), two transmembrane proteins (XylH) and a solute-binding protein (XylF).

It localises to the cell inner membrane. It carries out the reaction D-xylose(out) + ATP + H2O = D-xylose(in) + ADP + phosphate + H(+). Functionally, part of the ABC transporter complex XylFGH involved in xylose import. Responsible for energy coupling to the transport system. The chain is Xylose import ATP-binding protein XylG from Shigella flexneri.